A 380-amino-acid chain; its full sequence is Sterol 24-C-methyltransferase ERG6B (380 aa).

The protein belongs to the class I-like SAM-binding methyltransferase superfamily. Erg6/SMT family.

The catalysed reaction is lanosterol + S-adenosyl-L-methionine = eburicol + S-adenosyl-L-homocysteine + H(+). The protein operates within steroid metabolism; ergosterol biosynthesis. Its function is as follows. Sterol 24-C-methyltransferase; part of the third module of ergosterol biosynthesis pathway that includes the late steps of the pathway. ERG6A and ERG6B methylate lanosterol at C-24 to produce eburicol. The third module or late pathway involves the ergosterol synthesis itself through consecutive reactions that mainly occur in the endoplasmic reticulum (ER) membrane. Firstly, the squalene synthase ERG9 catalyzes the condensation of 2 farnesyl pyrophosphate moieties to form squalene, which is the precursor of all steroids. Squalene synthase is crucial for balancing the incorporation of farnesyl diphosphate (FPP) into sterol and nonsterol isoprene synthesis. Secondly, squalene is converted into lanosterol by the consecutive action of the squalene epoxidase ERG1 and the lanosterol synthase ERG7. Then, the delta(24)-sterol C-methyltransferase ERG6 methylates lanosterol at C-24 to produce eburicol. Eburicol is the substrate of the sterol 14-alpha demethylase encoded by CYP51A, CYP51B and CYP51C, to yield 4,4,24-trimethyl ergosta-8,14,24(28)-trienol. CYP51B encodes the enzyme primarily responsible for sterol 14-alpha-demethylation, and plays an essential role in ascospore formation. CYP51A encodes an additional sterol 14-alpha-demethylase, induced on ergosterol depletion and responsible for the intrinsic variation in azole sensitivity. The third CYP51 isoform, CYP51C, does not encode a sterol 14-alpha-demethylase, but is required for full virulence on host wheat ears. The C-14 reductase ERG24 then reduces the C14=C15 double bond which leads to 4,4-dimethylfecosterol. A sequence of further demethylations at C-4, involving the C-4 demethylation complex containing the C-4 methylsterol oxidases ERG25, the sterol-4-alpha-carboxylate 3-dehydrogenase ERG26 and the 3-keto-steroid reductase ERG27, leads to the production of fecosterol via 4-methylfecosterol. ERG28 has a role as a scaffold to help anchor ERG25, ERG26 and ERG27 to the endoplasmic reticulum. The C-8 sterol isomerase ERG2 then catalyzes the reaction which results in unsaturation at C-7 in the B ring of sterols and thus converts fecosterol to episterol. The sterol-C5-desaturases ERG3A and ERG3BB then catalyze the introduction of a C-5 double bond in the B ring to produce 5-dehydroepisterol. The C-22 sterol desaturases ERG5A and ERG5B further convert 5-dehydroepisterol into ergosta-5,7,22,24(28)-tetraen-3beta-ol by forming the C-22(23) double bond in the sterol side chain. Finally, ergosta-5,7,22,24(28)-tetraen-3beta-ol is substrate of the C-24(28) sterol reductase ERG4 to produce ergosterol. The chain is Sterol 24-C-methyltransferase ERG6B from Gibberella zeae (strain ATCC MYA-4620 / CBS 123657 / FGSC 9075 / NRRL 31084 / PH-1) (Wheat head blight fungus).